The sequence spans 1437 residues: Histone-lysine N-methyltransferase NSD3 (1437 aa).

Disordered stretches follow at residues 121 to 157 (PHEI…KLKI) and 181 to 252 (QASE…PVQP). Over residues 128–139 (PSPPQPPPPPSV) the composition is skewed to pro residues. S150 is modified (phosphoserine). Residues 154-157 (KLKI) carry the KIKL motif. Basic residues predominate over residues 187–201 (KSKHESRKEKRKKSN). Basic and acidic residues predominate over residues 202–248 (KHDSSRSEERKSHKIPKLEPEEQNRPNERVDTVSEKPREEPVLKEEA). Glycyl lysine isopeptide (Lys-Gly) (interchain with G-Cter in SUMO2) cross-links involve residues K218 and K245. In terms of domain architecture, PWWP 1 spans 270-333 (VGDLVWSKVG…EKRVREYKGH (64 aa)). 2 disordered regions span residues 344–365 (TKQA…QRER) and 406–465 (AKKS…EPPP). K413 participates in a covalent cross-link: Glycyl lysine isopeptide (Lys-Gly) (interchain with G-Cter in SUMO2). Positions 425-445 (VLNTQPEQTNAGEVASSLSST) are enriched in polar residues. S457 bears the Phosphoserine mark. Glycyl lysine isopeptide (Lys-Gly) (interchain with G-Cter in SUMO2) cross-links involve residues K502 and K532. The interval 540-696 (QDRLIISTPN…DSSLSRRGTG (157 aa)) is disordered. The segment covering 546-571 (STPNQRNEKPTQSVSSPEATSGSTGS) has biased composition (polar residues). Positions 583 to 595 (TRSESEKSTEVVP) are enriched in basic and acidic residues. S585, S587, and S590 each carry phosphoserine. K628 participates in a covalent cross-link: Glycyl lysine isopeptide (Lys-Gly) (interchain with G-Cter in SUMO2). Residue S655 is modified to Phosphoserine. Residues 682-692 (DVQSMDSSLSR) show a composition bias toward polar residues. 3 PHD-type zinc fingers span residues 701–748 (DTVC…CKTG), 749–805 (QHPC…CSME), and 862–955 (VGFC…CKAG). At K790 the chain carries N6-acetyllysine. The 63-residue stretch at 960–1022 (YKQIVWVKLG…QGRVFPYVEG (63 aa)) folds into the PWWP 2 domain. A coiled-coil region spans residues 1033–1069 (INKTFKKALEEAAKRFQELKAQRESKEALEIEKNSRK). Residues 1093 to 1143 (SEIPRCNCKPADENPCGLESECLNRMLQYECHPQVCPAGDRCQNQCFTKRL) form the AWS domain. The region spanning 1145–1262 (PDAEIIKTER…AGMELTFNYN (118 aa)) is the SET domain. A Glycyl lysine isopeptide (Lys-Gly) (interchain with G-Cter in SUMO2) cross-link involves residue K1151. Residues 1269–1285 (GRTECHCGADNCSGFLG) enclose the Post-SET domain. A PHD-type 4; atypical zinc finger spans residues 1321-1368 (EDYCFQCGDGGELVMCDKKDCPKAYHLLCLNLTQPPYGKWECPWHQCD).

Belongs to the class V-like SAM-binding methyltransferase superfamily. Histone-lysine methyltransferase family. SET2 subfamily. Interacts with BRD4. Interacts (via KIKL motif) with BRD3 (via NET domain). Highly expressed in brain, heart and skeletal muscle. Expressed at lower level in liver and lung.

It is found in the nucleus. The protein localises to the chromosome. It catalyses the reaction L-lysyl(4)-[histone H3] + 2 S-adenosyl-L-methionine = N(6),N(6)-dimethyl-L-lysyl(4)-[histone H3] + 2 S-adenosyl-L-homocysteine + 2 H(+). The catalysed reaction is L-lysyl(27)-[histone H3] + 2 S-adenosyl-L-methionine = N(6),N(6)-dimethyl-L-lysyl(27)-[histone H3] + 2 S-adenosyl-L-homocysteine + 2 H(+). Functionally, histone methyltransferase. Preferentially dimethylates 'Lys-4' and 'Lys-27' of histone H3 forming H3K4me2 and H3K27me2. H3 'Lys-4' methylation represents a specific tag for epigenetic transcriptional activation, while 'Lys-27' is a mark for transcriptional repression. The protein is Histone-lysine N-methyltransferase NSD3 of Homo sapiens (Human).